Here is a 237-residue protein sequence, read N- to C-terminus: Lectin (237 aa).

The N-linked (GlcNAc...) asparagine glycan is linked to Asn69. Ile106 bears the Blocked amino end (Ile) mark. Mn(2+) contacts are provided by Glu115 and Asp117. Ca(2+) contacts are provided by Asp117, Tyr120, Asn122, and Asp127. Residues Asp127 and His132 each coordinate Mn(2+).

It belongs to the leguminous lectin family. In terms of assembly, tetramer of two alpha and two beta chains. In terms of processing, the N-terminus of alpha chain is blocked. The alpha and beta chains are produced by proteolytic processing, with probably the loss of intervening amino acid(s).

Its function is as follows. D-mannose/D-glucose-binding lectin. Requires Ca(2+) and Mn(2+) ions for full activity. This is Lectin from Lablab purpureus (Hyacinth bean).